The chain runs to 479 residues: Phosphoglycerate kinase, glycosomal (479 aa).

(2R)-3-phosphoglycerate is bound by residues V23, D24, F25, N26, R39, S61, H62, G64, R65, R132, H168, and R169. Positions 214 and 215 each coordinate ADP. G214 is a binding site for CDP. AMP is bound by residues A215 and K216. Residue A215 participates in ATP binding. A215 serves as a coordination point for Mg(2+). K216 contacts (2R)-3-phosphoglycerate. D219 is a CDP binding site. Residue D219 participates in Mg(2+) binding. 2 residues coordinate ADP: K220 and G238. K220 provides a ligand contact to AMP. K220 serves as a coordination point for ATP. G238 contributes to the CDP binding site. AMP is bound by residues A239 and A311. The ATP site is built by A239 and A311. A311 and N335 together coordinate ADP. CDP contacts are provided by G336 and F341. 4 residues coordinate ADP: F341, E342, D374, and S375. E342 provides a ligand contact to AMP. Positions 342, 374, and 375 each coordinate ATP. Residue D374 coordinates Mg(2+).

This sequence belongs to the phosphoglycerate kinase family. As to quaternary structure, monomer. It depends on Mg(2+) as a cofactor.

It localises to the glycosome. The catalysed reaction is (2R)-3-phosphoglycerate + ATP = (2R)-3-phospho-glyceroyl phosphate + ADP. It functions in the pathway carbohydrate degradation; glycolysis; pyruvate from D-glyceraldehyde 3-phosphate: step 2/5. The sequence is that of Phosphoglycerate kinase, glycosomal (PGKC) from Leishmania major.